Here is a 306-residue protein sequence, read N- to C-terminus: MSNEFITFEKISRKSWKQLHQKSKPLLTQEELTNITSLNDNIDINDVIEVYLPLIHLIQIYKIAQENLSFSKSLFLKKDIQQRPFIIGISGSVAVGKSTTSRLLQLLLARTHKTSTVELVTTDGFLYPNSTLIKNNMLNRKGFPESYNMELLLNFLDTVKGGQTASAPVYSHEIYDIVPDQQQTFTNPDFLIIEGINVFQNQQNNRLYMSDYFDFSIYIDADSHHIEQWYLERFLSLLELAKHDPANYYARYTSLPQNEAIAFAKKVWKTINLENLEKFIEPTRNRAELILHKAADHKIDEIYLKK.

Residue 91–98 (GSVAVGKS) coordinates ATP.

Belongs to the prokaryotic pantothenate kinase family.

The protein localises to the cytoplasm. It carries out the reaction (R)-pantothenate + ATP = (R)-4'-phosphopantothenate + ADP + H(+). It functions in the pathway cofactor biosynthesis; coenzyme A biosynthesis; CoA from (R)-pantothenate: step 1/5. The polypeptide is Pantothenate kinase (Streptococcus equi subsp. zooepidemicus (strain H70)).